The sequence spans 371 residues: Leu/Ile/Val-binding protein homolog 1 (371 aa).

The N-terminal stretch at 1–23 (MRKTLFSGVALAAVIAFGGSAWA) is a signal peptide.

Belongs to the leucine-binding protein family.

Component of an amino-acid transport system. In Brucella melitensis biotype 1 (strain ATCC 23456 / CCUG 17765 / NCTC 10094 / 16M), this protein is Leu/Ile/Val-binding protein homolog 1.